Consider the following 585-residue polypeptide: Protein NRT1/ PTR FAMILY 4.6 (585 aa).

12 helical membrane-spanning segments follow: residues 28-48 (GMLA…AYLA), 75-95 (FMGT…AFFS), 96-116 (TFQI…ILTI), 142-162 (AMLF…KGSL), 184-204 (FFNY…TFVV), 211-231 (GWEW…LIFL), 343-363 (IVLK…CLAQ), 391-411 (IFPV…IIPF), 428-448 (IGVG…VEIK), 465-485 (LPVT…ADLF), 508-528 (SLSW…VSIV), and 554-574 (FYWL…FWAM).

It belongs to the major facilitator superfamily. Proton-dependent oligopeptide transporter (POT/PTR) (TC 2.A.17) family. As to expression, expressed in root hairs and in epidermis of both root tips and mature regions of roots. Detected in shoots, stems, flowers, siliques and imbibed seeds. Expressed in vascular tissues in cotyledons, trus leaves, hypocotyls, roots and inflorescence stems.

It localises to the cell membrane. Low-affinity proton-dependent nitrate transporter. Involved in constitutive nitrate uptake. Not involved in histidine or dipeptides transport. Involved in (+)-abscisic acid (ABA) transport, but not in gibberellin, indole-3-acetic acid or jasmonic acid import. Mediates cellular ABA uptake. Nitrate does not compete with abscisic acid as a substrate of NPF4.6. In Arabidopsis thaliana (Mouse-ear cress), this protein is Protein NRT1/ PTR FAMILY 4.6 (NPF4.6).